A 393-amino-acid chain; its full sequence is Thermostable carboxypeptidase 2 (393 aa).

Zn(2+) is bound by residues His-104, Asp-109, and His-245. Residue Tyr-302 is the Proton donor of the active site. Glu-373 functions as the Nucleophile in the catalytic mechanism.

Belongs to the peptidase M20 family. As to quaternary structure, homotetramer. Zn(2+) is required as a cofactor.

Its function is as follows. Can release basic, acidic, aromatic, and, to a lesser extent, aliphatic amino acids. The polypeptide is Thermostable carboxypeptidase 2 (cpsA2) (Saccharolobus solfataricus (strain ATCC 35092 / DSM 1617 / JCM 11322 / P2) (Sulfolobus solfataricus)).